Reading from the N-terminus, the 504-residue chain is ATP synthase subunit alpha (504 aa).

169 to 176 lines the ATP pocket; sequence GDRQTGKT.

It belongs to the ATPase alpha/beta chains family. F-type ATPases have 2 components, CF(1) - the catalytic core - and CF(0) - the membrane proton channel. CF(1) has five subunits: alpha(3), beta(3), gamma(1), delta(1), epsilon(1). CF(0) has three main subunits: a(1), b(2) and c(9-12). The alpha and beta chains form an alternating ring which encloses part of the gamma chain. CF(1) is attached to CF(0) by a central stalk formed by the gamma and epsilon chains, while a peripheral stalk is formed by the delta and b chains.

Its subcellular location is the cell membrane. The catalysed reaction is ATP + H2O + 4 H(+)(in) = ADP + phosphate + 5 H(+)(out). Produces ATP from ADP in the presence of a proton gradient across the membrane. The alpha chain is a regulatory subunit. The sequence is that of ATP synthase subunit alpha from Clostridium botulinum (strain Alaska E43 / Type E3).